We begin with the raw amino-acid sequence, 139 residues long: Small ribosomal subunit protein uS12 (139 aa).

D102 is subject to 3-methylthioaspartic acid.

The protein belongs to the universal ribosomal protein uS12 family. Part of the 30S ribosomal subunit. Contacts proteins S8 and S17. May interact with IF1 in the 30S initiation complex.

With S4 and S5 plays an important role in translational accuracy. Its function is as follows. Interacts with and stabilizes bases of the 16S rRNA that are involved in tRNA selection in the A site and with the mRNA backbone. Located at the interface of the 30S and 50S subunits, it traverses the body of the 30S subunit contacting proteins on the other side and probably holding the rRNA structure together. The combined cluster of proteins S8, S12 and S17 appears to hold together the shoulder and platform of the 30S subunit. The chain is Small ribosomal subunit protein uS12 from Phytoplasma australiense.